The chain runs to 647 residues: Putative ferric-chelate reductase 1 homolog (647 aa).

Residues tryptophan 10 to serine 30 traverse the membrane as a helical segment. Residues proline 25 to proline 195 enclose the Reelin domain. Residues asparagine 127 and asparagine 158 are each glycosylated (N-linked (GlcNAc...) asparagine). The region spanning threonine 245–glycine 368 is the DOMON domain. In terms of domain architecture, Cytochrome b561 spans lysine 372–alanine 570. Residues leucine 408–alanine 428 traverse the membrane as a helical segment. Heme b contacts are provided by histidine 409 and histidine 450. The next 5 membrane-spanning stretches (helical) occupy residues leucine 452–leucine 472, histidine 480–phenylalanine 500, glycine 515–valine 535, tryptophan 548–glycine 568, and leucine 616–valine 636. Heme b-binding residues include histidine 480 and histidine 516.

Belongs to the FRRS1 family. Requires heme b as cofactor.

It is found in the membrane. Functionally, putative ferric-chelate reductases reduce Fe(3+) to Fe(2+) before its transport from the endosome to the cytoplasm. This is Putative ferric-chelate reductase 1 homolog from Drosophila melanogaster (Fruit fly).